A 313-amino-acid chain; its full sequence is tRNA dimethylallyltransferase (313 aa).

Residue 17–24 (GPTASGKT) participates in ATP binding. 19–24 (TASGKT) contributes to the substrate binding site. Interaction with substrate tRNA regions lie at residues 42–45 (DSAL), 166–170 (QRLSR), and 247–252 (RCVGYR).

It belongs to the IPP transferase family. Monomer. It depends on Mg(2+) as a cofactor.

The enzyme catalyses adenosine(37) in tRNA + dimethylallyl diphosphate = N(6)-dimethylallyladenosine(37) in tRNA + diphosphate. In terms of biological role, catalyzes the transfer of a dimethylallyl group onto the adenine at position 37 in tRNAs that read codons beginning with uridine, leading to the formation of N6-(dimethylallyl)adenosine (i(6)A). This is tRNA dimethylallyltransferase from Serratia proteamaculans (strain 568).